Consider the following 199-residue polypeptide: Recombination protein RecR (199 aa).

The C4-type zinc finger occupies 56–71 (CAICGNVSEKETCGIC). Residues 79–174 (ATICVVEEAK…RVTRLASGLP (96 aa)) form the Toprim domain.

Belongs to the RecR family.

Functionally, may play a role in DNA repair. It seems to be involved in an RecBC-independent recombinational process of DNA repair. It may act with RecF and RecO. This chain is Recombination protein RecR, found in Clavibacter michiganensis subsp. michiganensis (strain NCPPB 382).